A 534-amino-acid chain; its full sequence is UDP-glucuronosyltransferase 1A4 (534 aa).

Residues 1-28 (MARGLQVPLPRLATGLLLLLSVQPWAES) form the signal peptide. N119, N142, N296, and N348 each carry an N-linked (GlcNAc...) asparagine glycan. The chain crosses the membrane as a helical span at residues 492-508 (VIGFLLAVVLTVAFITF).

It belongs to the UDP-glycosyltransferase family. Homodimer. Homooligomer. Interacts with UGT1A1, UGT1A3, UGT1A6, UGT1A7, UGT1A8, UGT1A9 and UGT1A10 to form heterodimers. Isoform 1 interacts with isoform 2/i2 suggesting that oligomerization is involved in negative regulation of transferase activity by isoform 2. Isoform 1 also interacts with respective i2 isoforms of UGT1A1, UGT1A3, UGT1A6, UGT1A7, UGT1A8, UGT1A9 and UGT1A10. In terms of tissue distribution, expressed in liver. Expressed in kidney, colon and small intestine. Not expressed in esophagus. Not expressed in skin. Expressed in liver, kidney, colon, esophagus and small intestine.

The protein resides in the endoplasmic reticulum membrane. It carries out the reaction glucuronate acceptor + UDP-alpha-D-glucuronate = acceptor beta-D-glucuronoside + UDP + H(+). The catalysed reaction is calcidiol + UDP-alpha-D-glucuronate = calcidiol 25-O-(beta-D-glucuronide) + UDP + H(+). The enzyme catalyses calcidiol + UDP-alpha-D-glucuronate = calcidiol 3-O-(beta-D-glucuronide) + UDP + H(+). It catalyses the reaction calcitriol + UDP-alpha-D-glucuronate = calcitriol 25-O-(beta-D-glucuronide) + UDP + H(+). It carries out the reaction (5Z,8Z,11Z,14Z)-eicosatetraenoate + UDP-alpha-D-glucuronate = O-[(5Z),(8Z),(11Z),(14Z)-eicosatetraenoyl]-beta-D-glucuronate + UDP. The catalysed reaction is 15-hydroxy-(5Z,8Z,11Z,13E)-eicosatetraenoate + UDP-alpha-D-glucuronate = 15-O-(beta-D-glucuronosyl)-(5Z,8Z,11Z,14Z)-eicosatetraenoate + UDP + H(+). The enzyme catalyses 20-hydroxy-(5Z,8Z,11Z,14Z)-eicosatetraenoate + UDP-alpha-D-glucuronate = 20-O-(beta-D-glucuronosyl)-(5Z,8Z,11Z,14Z)-eicosatetraenoate + UDP + H(+). UDP-glucuronosyltransferase (UGT) that catalyzes phase II biotransformation reactions in which lipophilic substrates are conjugated with glucuronic acid to increase the metabolite's water solubility, thereby facilitating excretion into either the urine or bile. Essential for the elimination and detoxification of drugs, xenobiotics and endogenous compounds. Involved in the glucuronidation of calcidiol, which is the major circulating form of vitamin D3 essential for the regulation of calcium and phosphate homeostasis. Also glucuronidates the biologically active form of vitamin D3, calcitriol, probably leading to its biliary transport and intestinal reabsorption. Involved in the glucuronidation of arachidonic acid (AA) and AA-derived eicosanoids including 15-HETE, 20-HETE and PGB1. In terms of biological role, lacks UDP-glucuronosyltransferase (UGT) activity but acts as a negative regulator of isoform 1. The chain is UDP-glucuronosyltransferase 1A4 from Homo sapiens (Human).